A 277-amino-acid chain; its full sequence is Putative thiosulfate sulfurtransferase (277 aa).

Rhodanese domains are found at residues 18–125 (DSAN…PLST) and 154–274 (SIKI…VPIE). The active-site Cysteine persulfide intermediate is the Cys-233. Arg-238 is a binding site for substrate.

It carries out the reaction thiosulfate + hydrogen cyanide = thiocyanate + sulfite + 2 H(+). In terms of biological role, may be a sulfotransferase involved in the formation of thiosulfate. This is Putative thiosulfate sulfurtransferase (cysA) from Mycobacterium leprae (strain TN).